We begin with the raw amino-acid sequence, 92 residues long: Nodulation protein F (92 aa).

Positions 4 to 88 (QLTLEIISAI…DVVEAVRGLL (85 aa)) constitute a Carrier domain. Serine 45 carries the post-translational modification O-(pantetheine 4'-phosphoryl)serine.

Post-translationally, 4'-phosphopantetheine is transferred from CoA to a specific serine of apo-NodF.

Proposed to synthesize nod factor fatty acyl chain. Involved in trans-2,trans-4,trans-6,cis-11-octadecatetraenoic acid biosynthesis. This Rhizobium leguminosarum bv. viciae protein is Nodulation protein F (nodF).